The chain runs to 221 residues: UPF0758 protein YicR (221 aa).

The MPN domain occupies 99-221 (ALLSPEMTRE…YVSFAERGWI (123 aa)). 3 residues coordinate Zn(2+): histidine 170, histidine 172, and aspartate 183. The JAMM motif signature appears at 170 to 183 (HNHPSGCAEPSKAD).

The protein belongs to the UPF0758 family. YicR subfamily.

The protein is UPF0758 protein YicR of Salmonella newport (strain SL254).